Consider the following 445-residue polypeptide: Questin oxidase (445 aa).

This sequence belongs to the questin oxidase family. NADPH is required as a cofactor. In terms of tissue distribution, specifically expressed in conidia.

The protein operates within secondary metabolite biosynthesis. Its function is as follows. Questin oxidase; part of the gene cluster that mediates the biosynthesis of trypacidin, a mycotoxin with antiprotozoal activity and that plays a role in the infection process. The pathway begins with the synthesis of atrochrysone thioester by the polyketide synthase (PKS) tpcC. The atrochrysone carboxyl ACP thioesterase tpcB then breaks the thioester bond and releases the atrochrysone carboxylic acid from tpcC. The decarboxylase tpcK converts atrochrysone carboxylic acid to atrochrysone which is further reduced into emodin anthrone. The next step is performed by the emodin anthrone oxygenase tpcL that catalyzes the oxidation of emodinanthrone to emodin. Emodin O-methyltransferase encoded by tpcA catalyzes methylation of the 8-hydroxy group of emodin to form questin. Ring cleavage of questin by questin oxidase tpcI leads to desmethylsulochrin via several intermediates including questin epoxide. Another methylation step catalyzed by tpcM leads to the formation of sulochrin which is further converted to monomethylsulfochrin by tpcH. Finally, the tpcJ catalyzes the conversion of monomethylsulfochrin to trypacidin. Trypacidin is toxic for human pulmonary and bronchial epithelial cells by initiating the intracellular formation of nitric oxide (NO) and hydrogen peroxide (H(2)O(2)), thus triggering host necrotic cell death. The trypacidin pathway is also able to produce endocrocin via a distinct route from the endocrocin Enc pathway. The protein is Questin oxidase of Aspergillus fumigatus (strain ATCC MYA-4609 / CBS 101355 / FGSC A1100 / Af293) (Neosartorya fumigata).